Consider the following 810-residue polypeptide: Lon protease (810 aa).

Positions Leu8–Leu201 constitute a Lon N-terminal domain. Gly353–Thr360 is a binding site for ATP. The 182-residue stretch at Asn589–Glu770 folds into the Lon proteolytic domain. Catalysis depends on residues Ser676 and Lys719.

Belongs to the peptidase S16 family. In terms of assembly, homohexamer. Organized in a ring with a central cavity.

The protein resides in the cytoplasm. It carries out the reaction Hydrolysis of proteins in presence of ATP.. Functionally, ATP-dependent serine protease that mediates the selective degradation of mutant and abnormal proteins as well as certain short-lived regulatory proteins. Required for cellular homeostasis and for survival from DNA damage and developmental changes induced by stress. Degrades polypeptides processively to yield small peptide fragments that are 5 to 10 amino acids long. Binds to DNA in a double-stranded, site-specific manner. In Desulforamulus reducens (strain ATCC BAA-1160 / DSM 100696 / MI-1) (Desulfotomaculum reducens), this protein is Lon protease.